The sequence spans 601 residues: Terpinolene synthase, chloroplastic (601 aa).

The transit peptide at M1–C32 directs the protein to the chloroplast. Mg(2+) contacts are provided by D354, D358, D498, T502, and E506. A DDXXD motif motif is present at residues D354 to D358.

It belongs to the terpene synthase family. Tpsd subfamily. Mg(2+) serves as cofactor. The cofactor is Mn(2+).

The protein resides in the plastid. Its subcellular location is the chloroplast. The catalysed reaction is (2E)-geranyl diphosphate = terpinolene + diphosphate. It functions in the pathway secondary metabolite biosynthesis; terpenoid biosynthesis. In terms of biological role, monoterpene synthase that catalyzes the formation of terpinolene and other monoterpenes from geranyl diphosphate. The polypeptide is Terpinolene synthase, chloroplastic (TES) (Ocimum basilicum (Sweet basil)).